A 188-amino-acid chain; its full sequence is UPF0301 protein MCA2336 2 (188 aa).

This sequence belongs to the UPF0301 (AlgH) family.

This Methylococcus capsulatus (strain ATCC 33009 / NCIMB 11132 / Bath) protein is UPF0301 protein MCA2336 2.